The following is a 182-amino-acid chain: MSIEEIPQGADVSIVPNKNEKKAKELIKKLGLKQIKGISRVTFKQRGNLIYAIDAPEVYRSQAGTYVVFGEAKVDDMNQRIAEAQAQQAQQEALQKAAADAGAAGDDKSPEAITADLEKASLQGGESNADAAEDDNEEVDETGINPKDIDLIVEQTRVSRGSAVKALKKHDGDMVNALMELS.

Residues 17–81 (NKNEKKAKEL…AKVDDMNQRI (65 aa)) form the NAC-A/B domain. The disordered stretch occupies residues 120–148 (ASLQGGESNADAAEDDNEEVDETGINPKD). Over residues 131–141 (AAEDDNEEVDE) the composition is skewed to acidic residues. The region spanning 144-182 (INPKDIDLIVEQTRVSRGSAVKALKKHDGDMVNALMELS) is the UBA domain.

It belongs to the NAC-alpha family. As to quaternary structure, part of the nascent polypeptide-associated complex (NAC), consisting of EGD2 and EGD1. NAC associates with ribosomes via EGD1.

It is found in the cytoplasm. The protein localises to the nucleus. In terms of biological role, component of the nascent polypeptide-associated complex (NAC), a dynamic component of the ribosomal exit tunnel, protecting the emerging polypeptides from interaction with other cytoplasmic proteins to ensure appropriate nascent protein targeting. The NAC complex also promotes mitochondrial protein import by enhancing productive ribosome interactions with the outer mitochondrial membrane and blocks the inappropriate interaction of ribosomes translating non-secretory nascent polypeptides with translocation sites in the membrane of the endoplasmic reticulum. EGD2 may also be involved in transcription regulation. The polypeptide is Nascent polypeptide-associated complex subunit alpha (EGD2) (Lodderomyces elongisporus (strain ATCC 11503 / CBS 2605 / JCM 1781 / NBRC 1676 / NRRL YB-4239) (Yeast)).